Here is a 473-residue protein sequence, read N- to C-terminus: MTDSKSAAPTTLYDKIWNDHLVHEADDGTCLLYIDRHLVHEVTSPQAFEGLRTAGRKVHAPEKTLAVVDHNVPTTDRSKPNPDPESADQIAALAENAREFGVTYYNEFDKRQGVVHVIGPEQGFTLPGTTIVCGDSHTSTHGAFGALAHGIGTSEVEHVLATQTLIQKKAKNMRVTVDGALPDGVTAKDIILAIIGEIGTAGGTGYVLEYAGSAIRALSMEGRMTVCNMSIEGGARAGLIAPDEKAYAYLKGRPMAPTGANWDAAMRYWETLRSDEGAHFDHELRLDAAALPPIVTWGTSPEDVISILGSVPNPADIADEAKRLSKERALAYMGLTAGTKITDIKIDRAFIGSCTNGRIEDLRAAAKVAEGKTVNGNVNAIIVPGSGLVKEQAEAEGLDKIFIAAGFEWREPGCSMCLAMNPDKLAPDERCASTSNRNFEGRQGFKGRTHLVSPAMAAAAAIAGHFVDIRDWR.

[4Fe-4S] cluster-binding residues include cysteine 354, cysteine 414, and cysteine 417.

The protein belongs to the aconitase/IPM isomerase family. LeuC type 1 subfamily. Heterodimer of LeuC and LeuD. The cofactor is [4Fe-4S] cluster.

The enzyme catalyses (2R,3S)-3-isopropylmalate = (2S)-2-isopropylmalate. It functions in the pathway amino-acid biosynthesis; L-leucine biosynthesis; L-leucine from 3-methyl-2-oxobutanoate: step 2/4. Its function is as follows. Catalyzes the isomerization between 2-isopropylmalate and 3-isopropylmalate, via the formation of 2-isopropylmaleate. The sequence is that of 3-isopropylmalate dehydratase large subunit from Rhodopseudomonas palustris (strain BisB18).